A 307-amino-acid chain; its full sequence is Ornithine carbamoyltransferase (307 aa).

Carbamoyl phosphate-binding positions include 51 to 54 (STRT), Gln-78, Arg-102, and 129 to 132 (HPCQ). Residues Asn-160, Asp-220, and 224-225 (SM) each bind L-ornithine. Residues 260–261 (CL) and Arg-288 each bind carbamoyl phosphate.

It belongs to the aspartate/ornithine carbamoyltransferase superfamily. OTCase family.

It localises to the cytoplasm. It carries out the reaction carbamoyl phosphate + L-ornithine = L-citrulline + phosphate + H(+). The protein operates within amino-acid biosynthesis; L-arginine biosynthesis; L-arginine from L-ornithine and carbamoyl phosphate: step 1/3. Its function is as follows. Reversibly catalyzes the transfer of the carbamoyl group from carbamoyl phosphate (CP) to the N(epsilon) atom of ornithine (ORN) to produce L-citrulline. The polypeptide is Ornithine carbamoyltransferase (argF) (Archaeoglobus fulgidus (strain ATCC 49558 / DSM 4304 / JCM 9628 / NBRC 100126 / VC-16)).